The following is a 560-amino-acid chain: Membrane protein insertase YidC (560 aa).

The next 6 membrane-spanning stretches (helical) occupy residues Ile-5–Phe-25, Ala-334–Phe-354, Tyr-357–Phe-377, Leu-431–Ile-451, Leu-476–Leu-496, and Phe-522–Trp-542.

The protein belongs to the OXA1/ALB3/YidC family. Type 1 subfamily. In terms of assembly, interacts with the Sec translocase complex via SecD. Specifically interacts with transmembrane segments of nascent integral membrane proteins during membrane integration.

The protein localises to the cell inner membrane. In terms of biological role, required for the insertion and/or proper folding and/or complex formation of integral membrane proteins into the membrane. Involved in integration of membrane proteins that insert both dependently and independently of the Sec translocase complex, as well as at least some lipoproteins. Aids folding of multispanning membrane proteins. The sequence is that of Membrane protein insertase YidC from Rickettsia felis (strain ATCC VR-1525 / URRWXCal2) (Rickettsia azadi).